The primary structure comprises 125 residues: Large ribosomal subunit protein bL12 (125 aa).

The protein belongs to the bacterial ribosomal protein bL12 family. Homodimer. Part of the ribosomal stalk of the 50S ribosomal subunit. Forms a multimeric L10(L12)X complex, where L10 forms an elongated spine to which 2 to 4 L12 dimers bind in a sequential fashion. Binds GTP-bound translation factors.

Its function is as follows. Forms part of the ribosomal stalk which helps the ribosome interact with GTP-bound translation factors. Is thus essential for accurate translation. The chain is Large ribosomal subunit protein bL12 from Methylorubrum extorquens (strain CM4 / NCIMB 13688) (Methylobacterium extorquens).